Here is a 492-residue protein sequence, read N- to C-terminus: Adenylyltransferase and sulfurtransferase uba4 (492 aa).

ATP contacts are provided by residues glycine 99, aspartate 120, serine 127 to arginine 131, lysine 144, and aspartate 188 to asparagine 189. Residues cysteine 237 and cysteine 240 each coordinate Zn(2+). Cysteine 254 acts as the Glycyl thioester intermediate; for adenylyltransferase activity in catalysis. Zn(2+) contacts are provided by cysteine 317 and cysteine 320. A Rhodanese domain is found at glycine 378 to proline 490. Cysteine 445 acts as the Cysteine persulfide intermediate; for sulfurtransferase activity in catalysis.

The protein in the N-terminal section; belongs to the HesA/MoeB/ThiF family. UBA4 subfamily. Zn(2+) serves as cofactor.

The protein resides in the cytoplasm. It localises to the cytosol. The catalysed reaction is [molybdopterin-synthase sulfur-carrier protein]-C-terminal Gly-Gly + ATP + H(+) = [molybdopterin-synthase sulfur-carrier protein]-C-terminal Gly-Gly-AMP + diphosphate. It catalyses the reaction [molybdopterin-synthase sulfur-carrier protein]-C-terminal Gly-Gly-AMP + S-sulfanyl-L-cysteinyl-[cysteine desulfurase] + AH2 = [molybdopterin-synthase sulfur-carrier protein]-C-terminal-Gly-aminoethanethioate + L-cysteinyl-[cysteine desulfurase] + A + AMP + 2 H(+). Its pathway is tRNA modification; 5-methoxycarbonylmethyl-2-thiouridine-tRNA biosynthesis. The protein operates within cofactor biosynthesis; molybdopterin biosynthesis. Its function is as follows. Plays a central role in 2-thiolation of mcm(5)S(2)U at tRNA wobble positions of cytosolic tRNA(Lys), tRNA(Glu) and tRNA(Gln). Also essential during biosynthesis of the molybdenum cofactor. Acts by mediating the C-terminal thiocarboxylation of sulfur carriers urm1 and mocs2a. Its N-terminus first activates urm1 and mocs2a as acyl-adenylates (-COAMP), then the persulfide sulfur on the catalytic cysteine is transferred to urm1 and mocs2a to form thiocarboxylation (-COSH) of their C-terminus. The reaction probably involves hydrogen sulfide that is generated from the persulfide intermediate and that acts as a nucleophile towards urm1 and mocs2a. Subsequently, a transient disulfide bond is formed. Does not use thiosulfate as sulfur donor; nfs1 probably acting as a sulfur donor for thiocarboxylation reactions. This chain is Adenylyltransferase and sulfurtransferase uba4, found in Aspergillus clavatus (strain ATCC 1007 / CBS 513.65 / DSM 816 / NCTC 3887 / NRRL 1 / QM 1276 / 107).